The primary structure comprises 135 residues: ATP synthase epsilon chain (135 aa).

It belongs to the ATPase epsilon chain family. As to quaternary structure, F-type ATPases have 2 components, CF(1) - the catalytic core - and CF(0) - the membrane proton channel. CF(1) has five subunits: alpha(3), beta(3), gamma(1), delta(1), epsilon(1). CF(0) has three main subunits: a, b and c.

It localises to the cell inner membrane. Functionally, produces ATP from ADP in the presence of a proton gradient across the membrane. In Allorhizobium ampelinum (strain ATCC BAA-846 / DSM 112012 / S4) (Agrobacterium vitis (strain S4)), this protein is ATP synthase epsilon chain.